Reading from the N-terminus, the 85-residue chain is U4-theraphotoxin-Hhn1u (85 aa).

A signal peptide spans 1 to 22 (MKMTLIAILTCAAVLVLHTTAA). A propeptide spanning residues 23–48 (EELEAESQLMEVGMPDTELEAVDEER) is cleaved from the precursor. 3 cysteine pairs are disulfide-bonded: Cys-52-Cys-66, Cys-56-Cys-77, and Cys-71-Cys-82.

It belongs to the neurotoxin 12 (Hwtx-2) family. 02 (Hwtx-2) subfamily. As to expression, expressed by the venom gland.

The protein localises to the secreted. Its function is as follows. Postsynaptic neurotoxin. This Cyriopagopus hainanus (Chinese bird spider) protein is U4-theraphotoxin-Hhn1u.